The following is a 396-amino-acid chain: NADH-quinone oxidoreductase subunit D (396 aa).

This sequence belongs to the complex I 49 kDa subunit family. NDH-1 is composed of 14 different subunits. Subunits NuoB, C, D, E, F, and G constitute the peripheral sector of the complex.

The protein localises to the cell inner membrane. It catalyses the reaction a quinone + NADH + 5 H(+)(in) = a quinol + NAD(+) + 4 H(+)(out). Functionally, NDH-1 shuttles electrons from NADH, via FMN and iron-sulfur (Fe-S) centers, to quinones in the respiratory chain. The immediate electron acceptor for the enzyme in this species is believed to be ubiquinone. Couples the redox reaction to proton translocation (for every two electrons transferred, four hydrogen ions are translocated across the cytoplasmic membrane), and thus conserves the redox energy in a proton gradient. This is NADH-quinone oxidoreductase subunit D from Brucella abortus (strain S19).